The sequence spans 377 residues: Actin-related protein 2/3 complex subunit 1 (377 aa).

WD repeat units follow at residues 9 to 48, 53 to 92, 98 to 139, 144 to 183, and 203 to 242; these read ILPK…WKHA, DHDK…TWKQ, RLNR…WVSK, PLRS…VDAK, and PSGG…QPPR. The interval 293–313 is disordered; sequence GTSKTSFTHTGNTGEGREEEG. The stretch at 342 to 376 is one WD 6 repeat; it reads VHQNMIATLRPYAGTPGNITAFTSSGTDGRVVLWT.

Belongs to the WD repeat ARPC1 family. In terms of assembly, component of the Arp2/3 complex composed of arp2, act2, arc1/p41-ARC, arc2/p34-ARC, arc3/p21-ARC, arc4/p20-ARC and arc5/p16-ARC.

Its subcellular location is the cytoplasm. It localises to the cytoskeleton. The protein resides in the actin patch. In terms of biological role, functions as a component of the Arp2/3 complex which is involved in regulation of actin polymerization and together with an activating nucleation-promoting factor (NPF) mediates the formation of branched actin networks. This chain is Actin-related protein 2/3 complex subunit 1 (arc1), found in Schizosaccharomyces pombe (strain 972 / ATCC 24843) (Fission yeast).